A 221-amino-acid polypeptide reads, in one-letter code: Capsid protein (221 aa).

Residues 1-24 form a disordered region; it reads MSSSQKKAGGKAGKPTKRSQNYAA. At Ser2 the chain carries N-acetylserine; by host.

It belongs to the alphamovirus/ilarvirus capsid protein family.

Its subcellular location is the virion. Functionally, capsid protein. Binds to the to the 3' end of the nonpolyadenylated viral RNA and is involved in viral RNA translation initiation. Probably binds RNA and plays a role in packaging. The polypeptide is Capsid protein (Alfalfa mosaic virus (AMV)).